Here is a 619-residue protein sequence, read N- to C-terminus: MLRYNLRIPVQAKKAMGSLAPLRPMKSRFGLRCISDKPNEVFTKLSDDNDPQRDAFFKYSWGSWLANDRQEKEKRTTKFSIEGLTDVINDLHAQSKEKAKSEASEGNIPPPSYNPNLTVSLSHNLSALTLGSLNPNETLRVTAMASIHEGKHHRIYKVDTNADKSFILRIPYATNSEAAISYRLKSEVATMDFADLKLGLKVPKVYCFGANALNPIRQPFILEEHIEGRLLMRDWNPLEDDASDKKAHISKLNKVIDPLSQFQSKLLSVEFNQFGSLYFAKDYPDSEGPAYEGEKNESLKNRWSVGPSVERCFWRQKSALPLDKLMQFVGPWSKSKPMDIVKSLGLLEAENAKSRLALQQTDASPAPIEESILREQVRTFENLAEISSSLFNTKSHVIPNIDSLLKPRLYHPDLDPMNVLLDEKDNSAPYLLDFENTSIKPFILQNSPQFVAYDGPKIYNLEEDVEGYKDLSEAEKVQYQFMYKRTRNQHLWESALNKNFNKLISAVAPPVKLLRSPYVACVERKNDMEYLLVDESLIQLREVWEVFAKNKLVSEKKFPLEYTEEQLQKHSTDLNAFHEQLIKSPFAATQGWIPQDMFENLVKAGILIKDKNGDYTIKQ.

The transit peptide at 1-34 directs the protein to the mitochondrion; the sequence is MLRYNLRIPVQAKKAMGSLAPLRPMKSRFGLRCI. The tract at residues 95–115 is disordered; sequence SKEKAKSEASEGNIPPPSYNP.

It belongs to the AIM9 family.

It localises to the mitochondrion. This chain is Altered inheritance of mitochondria protein 9, mitochondrial (AIM9), found in Lachancea thermotolerans (strain ATCC 56472 / CBS 6340 / NRRL Y-8284) (Yeast).